A 310-amino-acid chain; its full sequence is tRNA uridine(34) hydroxylase (310 aa).

In terms of domain architecture, Rhodanese spans 127–225 (KDKDTIVIDT…YLEDISKEES (99 aa)). Cysteine 185 (cysteine persulfide intermediate) is an active-site residue.

The protein belongs to the TrhO family.

It catalyses the reaction uridine(34) in tRNA + AH2 + O2 = 5-hydroxyuridine(34) in tRNA + A + H2O. Functionally, catalyzes oxygen-dependent 5-hydroxyuridine (ho5U) modification at position 34 in tRNAs. This is tRNA uridine(34) hydroxylase from Prochlorococcus marinus (strain MIT 9515).